Here is a 1155-residue protein sequence, read N- to C-terminus: DNA-directed RNA polymerase subunit beta (1155 aa).

Belongs to the RNA polymerase beta chain family. As to quaternary structure, the RNAP catalytic core consists of 2 alpha, 1 beta, 1 beta' and 1 omega subunit. When a sigma factor is associated with the core the holoenzyme is formed, which can initiate transcription.

It catalyses the reaction RNA(n) + a ribonucleoside 5'-triphosphate = RNA(n+1) + diphosphate. Its function is as follows. DNA-dependent RNA polymerase catalyzes the transcription of DNA into RNA using the four ribonucleoside triphosphates as substrates. The polypeptide is DNA-directed RNA polymerase subunit beta (Borrelia garinii subsp. bavariensis (strain ATCC BAA-2496 / DSM 23469 / PBi) (Borreliella bavariensis)).